We begin with the raw amino-acid sequence, 410 residues long: Neurotensin receptor type 2 (410 aa).

The Extracellular segment spans residues 1–32 (METSSPRPPRPSSNPGLSLDARLGVDTRLWAK). The chain crosses the membrane as a helical span at residues 33–55 (VLFTALYALIWALGAAGNALSAH). Residues 56-64 (VVLKARAGR) lie on the Cytoplasmic side of the membrane. The helical transmembrane segment at 65–87 (AGRLRHHVLSLALAGLLLLLVGV) threads the bilayer. Topologically, residues 88 to 109 (PVELYSFVWFHYPWVFGDLGCR) are extracellular. Cys-108 and Cys-194 form a disulfide bridge. Residues 110-131 (GYYFVHELCAYATVLSVAGLSA) form a helical membrane-spanning segment. Residues 132 to 154 (ERCLAVCQPLRARSLLTPRRTRW) are Cytoplasmic-facing. Residues 155 to 176 (LVALSWAASLGLALPMAVIMGQ) form a helical membrane-spanning segment. Residues 177-217 (KHELETADGEPEPASRVCTVLVSRTALQVFIQVNVLVSFVL) lie on the Extracellular side of the membrane. A helical transmembrane segment spans residues 218 to 237 (PLALTAFLNGVTVSHLLALC). Topologically, residues 238-297 (SQVPSTSTPGSSTPSRLELLSEEGLLSFIVWKKTFIQGGQVSLVRHKDVRRIRSLQRSVQ) are cytoplasmic. Residues 298 to 318 (VLRAIVVMYVICWLPYHARRL) traverse the membrane as a helical segment. Topologically, residues 319-337 (MYCYVPDDAWTDPLYNFYH) are extracellular. The chain crosses the membrane as a helical span at residues 338–358 (YFYMVTNTLFYVSSAVTPLLY). Over 359-410 (NAVSSSFRKLFLEAVSSLCGEHHPMKRLPPKPQSPTLMDTASGFGDPPETRT) the chain is Cytoplasmic. The S-palmitoyl cysteine moiety is linked to residue Cys-377. The tract at residues 381 to 410 (HPMKRLPPKPQSPTLMDTASGFGDPPETRT) is disordered.

The protein belongs to the G-protein coupled receptor 1 family. Neurotensin receptor subfamily. NTSR2 sub-subfamily. Expressed in prostate (at protein level).

The protein resides in the cell membrane. Its function is as follows. Receptor for the tridecapeptide neurotensin. It is associated with G proteins that activate a phosphatidylinositol-calcium second messenger system. In Homo sapiens (Human), this protein is Neurotensin receptor type 2 (NTSR2).